A 402-amino-acid polypeptide reads, in one-letter code: La-related protein 7 homolog (402 aa).

The segment at 64-138 (EPLNPDFLSA…FDNSSHMVIR (75 aa)) is HTH La-type RNA-binding-like region. Positions 148 to 230 (IPLYDRIIYV…LTRKEWTNRE (83 aa)) are RRM-like region. Residues 288-400 (DFTKNLLTRI…EEEKNYWRML (113 aa)) form a xRRM-like region region. The xRRM domain occupies 288–402 (DFTKNLLTRI…EKNYWRMLKK (115 aa)).

The protein belongs to the LARP7 family. Component of the telomerase holoenzyme complex composed minimally of trt1 and the telomerase RNA template component. Interacts with skp1.

Its subcellular location is the chromosome. It is found in the telomere. The protein resides in the nucleus. The protein localises to the cytoplasm. Functionally, RNA-binding protein required for assembly of the holoenzyme telomerase ribonucleoprotein (RNP) complex. Specifically binds telomerase RNA ter1 and promotes assembly of ter1 with catalytic subunit trt1. Telomerase is a ribonucleoprotein enzyme essential that copies new telomeric repeats onto chromosome ends and functions to maintain cell division. In Schizosaccharomyces pombe (strain 972 / ATCC 24843) (Fission yeast), this protein is La-related protein 7 homolog.